The sequence spans 486 residues: Hematopoietic lineage cell-specific protein (486 aa).

Positions 27–66 (FVNDISEKEQRWGAKTIEGSGRTEHINIHQLRNKVSEEHD) are involved in HAX-1 binding. At K41 the chain carries N6-acetyllysine. Cortactin repeat units follow at residues 79-115 (ASHG…SQTD), 116-152 (AAKG…SQKD), and 153-189 (YSRG…SQRD). The residue at position 123 (K123) is an N6-acetyllysine. Y140 is modified (phosphotyrosine). Residues 190 to 212 (YAKGFGGQYGIQKDRVDKSAVGF) form a Cortactin 4; truncated repeat. K192 carries the N6-acetyllysine modification. Position 198 is a phosphotyrosine (Y198). Y222 is modified (phosphotyrosine; by FGR). K241 bears the N6-acetyllysine mark. Residues 243–276 (ESMAEEKRKREEEEKAQQVARRQQERKAVTKRSP) show a composition bias toward basic and acidic residues. The disordered stretch occupies residues 243–419 (ESMAEEKRKR…SALAGSSGCP (177 aa)). Phosphoserine is present on S275. Phosphothreonine is present on T308. A compositionally biased stretch (basic and acidic residues) spans 315–324 (EPVRTSREHP). Composition is skewed to acidic residues over residues 353–383 (QVEE…DVEE) and 390–405 (EDEP…EPED). Phosphotyrosine; by SYK and FES occurs at positions 378 and 397. Over residues 406 to 419 (SSFSSALAGSSGCP) the composition is skewed to low complexity. The SH3 domain occupies 428-486 (ALGISAVAVYDYQGEGSDELSFDPDDVITDIEMVDEGWWRGRCHGHFGLFPANYVKLLE).

As to quaternary structure, associates with the SH2 and SH3 domains of LCK. Binding to he LCK SH3 domain occurs constitutively, while binding to the LCK SH2 domain occurs only upon TCR stimulation. A similar binding pattern was observed with LYN, but not with FYN in which the FYN SH2 region associates upon TCR stimulation but the FYN SH3 region does not associate regardless of TCR stimulation. Directly associates with HAX1, through binding to its C-terminal region. Interacts with HS1BP3. Interacts with FES/FPS. Interacts (via SH2 domain) with FGR. Forms a multiprotein complex with LYN and ANKRD54. In terms of processing, phosphorylated by FES. Phosphorylated by LYN, FYN and FGR after cross-linking of surface IgM on B-cells. Phosphorylation by LYN, FYN and FGR requires prior phosphorylation by SYK or FES. Expressed only in tissues and cells of hematopoietic origin.

It localises to the membrane. It is found in the cytoplasm. The protein localises to the mitochondrion. Its function is as follows. Substrate of the antigen receptor-coupled tyrosine kinase. Plays a role in antigen receptor signaling for both clonal expansion and deletion in lymphoid cells. May also be involved in the regulation of gene expression. This is Hematopoietic lineage cell-specific protein (HCLS1) from Homo sapiens (Human).